The primary structure comprises 317 residues: Adenosine receptor A3 (317 aa).

Topologically, residues 1–14 (MPVNSTAVSLASVT) are extracellular. Asn4 is a glycosylation site (N-linked (GlcNAc...) asparagine). Residues 15–37 (YISVEILIGLCAIVGNVLVIWVV) form a helical membrane-spanning segment. Residues 38-48 (KLNPSLQTTTF) lie on the Cytoplasmic side of the membrane. A helical membrane pass occupies residues 49-72 (YFIVSLALADIAVGVLVMPLAIVI). Residues 73–84 (SLGVTIHFYSCL) are Extracellular-facing. Cys83 and Cys165 are oxidised to a cystine. Residues 85–106 (LMTCLLMIFTHASIMSLLAIAV) traverse the membrane as a helical segment. The Cytoplasmic portion of the chain corresponds to 107-126 (DRYLRVKLTVRYRRVTTQRR). Residues 127–148 (IWLALGLCWLVSFLVGLTPMFG) form a helical membrane-spanning segment. The Extracellular portion of the chain corresponds to 149–176 (WNMKLSSADKNLTFLPCQFRSVMRMDYM). The chain crosses the membrane as a helical span at residues 177–197 (VYFSFFTWILIPLVVMCAIYF). The Cytoplasmic segment spans residues 198 to 230 (DIFYVIRNRLSQNFSGSKETGAFYGREFKTAKS). The helical transmembrane segment at 231-254 (LSLVLFLFALSWLPLSIINCIIYF) threads the bilayer. Residues 255–260 (NGEVPQ) are Extracellular-facing. Residues 261–283 (IVLYLGILLSHANSMMNPIVYAY) form a helical membrane-spanning segment. At 284-317 (KIKKFKETYLLILKACVICQPSKSMDPSIEQTSE) the chain is on the cytoplasmic side. The S-palmitoyl cysteine moiety is linked to residue Cys302.

The protein belongs to the G-protein coupled receptor 1 family. Phosphorylation on Thr-315 and Ser-316 may be crucial for rapid desensitization. Phosphorylation on Thr-315 may be necessary for phosphorylation on Ser-316 to occur.

The protein resides in the cell membrane. In terms of biological role, receptor for adenosine. The activity of this receptor is mediated by G proteins which inhibits adenylyl cyclase. This Bos taurus (Bovine) protein is Adenosine receptor A3 (ADORA3).